A 374-amino-acid chain; its full sequence is Trichodiene synthase (374 aa).

Mg(2+) contacts are provided by aspartate 100, glutamate 164, asparagine 225, serine 229, glutamate 233, aspartate 239, and isoleucine 241. An aspartate-rich domain region spans residues 100–104; sequence DDSKD.

Belongs to the trichodiene synthase family. Requires Mg(2+) as cofactor. It depends on Mn(2+) as a cofactor.

It catalyses the reaction (2E,6E)-farnesyl diphosphate = trichodiene + diphosphate. Its pathway is sesquiterpene biosynthesis; trichothecene biosynthesis. Benzyl triethylammonium cation (BTAC) acts as a competitive inhibitor of trichodiene synthase reaction in the presence of pyrophosphate (PPi). Its function is as follows. Trichodiene synthase; part of the core gene cluster that mediates the biosynthesis of trichothecenes, a very large family of chemically related bicyclic sesquiterpene compounds acting as mycotoxins, including T2-toxin. The biosynthesis of trichothecenes begins with the cyclization of farnesyl diphosphate to trichodiene and is catalyzed by the trichodiene synthase TRI5. Trichodiene undergoes a series of oxygenations catalyzed by the cytochrome P450 monooxygenase TRI4. TRI4 controls the addition of four oxygens at C-2, C-3, C-11, and the C-12, C-13-epoxide to form the intermediate isotrichotriol. Isotrichotriol then undergoes a non-enzymatic isomerization and cyclization to form isotrichodermol. During this process, the oxygen at the C-2 position becomes the pyran ring oxygen and the hydroxyl group at C-11 is lost. More complex type A trichothecenes are built by modifying isotrichodermol through a series of paired hydroxylation and acetylation or acylation steps. Isotrichodermol is converted to isotrichodermin by the acetyltransferase TRI101. TRI101 encodes a C-3 transacetylase that acts as a self-protection or resistance factor during biosynthesis and that the presence of a free C-3 hydroxyl group is a key component of Fusarium trichothecene phytotoxicity. A second hydroxyl group is added to C-15 by the trichothecene C-15 hydroxylase TRI11, producing 15-decalonectrin, which is then acetylated by TRI3, producing calonectrin. A third hydroxyl group is added at C-4 by the cytochrome P450 monooxygenase TRI13, converting calonectrin to 3,15-diacetoxyspirpenol, which is subsequently acetylated by the acetyltransferase TRI7. A fourth hydroxyl group is added to C-8 by the cytochrome P450 monooxygenase TRI1, followed by the addition of an isovaleryl moiety by TRI16. Finally, the acetyl group is removed from the C-3 position by the trichothecene C-3 esterase TRI8 to produce T-2 toxin. This chain is Trichodiene synthase, found in Fusarium sporotrichioides.